Consider the following 402-residue polypeptide: MSKNLILILNCGSSSLKFAVLDPKTGDEKLSGLAEAFNLEDARIKWKLHGEKGNADLGAGAAHSEALTFIANELLSEELRSSIGAIGHRIVHGGEQFTSSVVINDDVVKGIEHAIQFAPLHNPAHLIGIKEAFRIFPELKEKNVAVFDTAFHQTMPEEAFLYALPYKLYKEHGIRRYGAHGTSHLFITSQVAELAGKPVDQTNAIICHLGNGGSVSVVRNGKCIDTSMGLTPLEGLVMGTRSGDIDPAIVFYLYKNLGMSMEQIEDTLVKKSGLLGLTEVTSDCRYAEDNYEDASKPEAKRALDVYSYRLAKYIGAYMAILGDDHLDAIAFTGGIGENSGHVRELALNHLKLFGVKLDVERNLAARFGKSGVITADDSTFKAVVIPTNEELVIAQDTAKLAL.

Residue Asn10 coordinates Mg(2+). Lys17 is a binding site for ATP. Arg89 provides a ligand contact to substrate. The active-site Proton donor/acceptor is Asp148. Residues 208–212 (HLGNG), 283–285 (DCR), and 334–338 (GIGEN) contribute to the ATP site. Glu389 is a Mg(2+) binding site.

This sequence belongs to the acetokinase family. As to quaternary structure, homodimer. It depends on Mg(2+) as a cofactor. Mn(2+) serves as cofactor.

Its subcellular location is the cytoplasm. It catalyses the reaction acetate + ATP = acetyl phosphate + ADP. It functions in the pathway metabolic intermediate biosynthesis; acetyl-CoA biosynthesis; acetyl-CoA from acetate: step 1/2. Functionally, catalyzes the formation of acetyl phosphate from acetate and ATP. Can also catalyze the reverse reaction. The protein is Acetate kinase of Actinobacillus pleuropneumoniae serotype 5b (strain L20).